Here is a 354-residue protein sequence, read N- to C-terminus: Glutamine synthetase (354 aa).

In terms of domain architecture, GS beta-grasp spans phenylalanine 22–glycine 101. The region spanning histidine 108 to lysine 354 is the GS catalytic domain.

The protein belongs to the glutamine synthetase family. In terms of assembly, homooctamer.

The protein localises to the cytoplasm. It carries out the reaction L-glutamate + NH4(+) + ATP = L-glutamine + ADP + phosphate + H(+). In Amanita muscaria (Fly agaric), this protein is Glutamine synthetase (GLN1).